The primary structure comprises 305 residues: Orotidine 5'-phosphate decarboxylase (305 aa).

Lys108 serves as the catalytic Proton donor.

Belongs to the OMP decarboxylase family. Type 2 subfamily.

It carries out the reaction orotidine 5'-phosphate + H(+) = UMP + CO2. It functions in the pathway pyrimidine metabolism; UMP biosynthesis via de novo pathway; UMP from orotate: step 2/2. The protein is Orotidine 5'-phosphate decarboxylase of Caldicellulosiruptor saccharolyticus (strain ATCC 43494 / DSM 8903 / Tp8T 6331).